Reading from the N-terminus, the 346-residue chain is Endo-1,4-beta-xylanase B (346 aa).

Residues 1-19 (MKGLPALLLLLIGCVSSFG) form the signal peptide. The GH10 domain occupies 41–338 (GNNFWSLPDA…KPCYFAIREL (298 aa)). Glutamate 153 acts as the Proton donor in catalysis. Catalysis depends on glutamate 259, which acts as the Nucleophile.

It belongs to the glycosyl hydrolase 10 (cellulase F) family.

The enzyme catalyses Endohydrolysis of (1-&gt;4)-beta-D-xylosidic linkages in xylans.. The chain is Endo-1,4-beta-xylanase B (xynB) from Thermotoga neapolitana.